Reading from the N-terminus, the 1415-residue chain is DNA-directed RNA polymerase subunit beta' (1415 aa).

Zn(2+) is bound by residues C70, C72, C85, and C88. D461, D463, and D465 together coordinate Mg(2+). Residues C820, C894, C901, and C904 each coordinate Zn(2+).

The protein belongs to the RNA polymerase beta' chain family. In terms of assembly, the RNAP catalytic core consists of 2 alpha, 1 beta, 1 beta' and 1 omega subunit. When a sigma factor is associated with the core the holoenzyme is formed, which can initiate transcription. Mg(2+) is required as a cofactor. The cofactor is Zn(2+).

The enzyme catalyses RNA(n) + a ribonucleoside 5'-triphosphate = RNA(n+1) + diphosphate. DNA-dependent RNA polymerase catalyzes the transcription of DNA into RNA using the four ribonucleoside triphosphates as substrates. This is DNA-directed RNA polymerase subunit beta' from Cupriavidus necator (strain ATCC 17699 / DSM 428 / KCTC 22496 / NCIMB 10442 / H16 / Stanier 337) (Ralstonia eutropha).